We begin with the raw amino-acid sequence, 602 residues long: Beta-(1--&gt;2)glucan export ATP-binding/permease protein NdvA (602 aa).

Residues 21–306 (GWLLAFANLL…VVSFINNVFM (286 aa)) form the ABC transmembrane type-1 domain. The next 6 membrane-spanning stretches (helical) occupy residues 22-42 (WLLA…PVLF), 63-83 (FLAA…LVAL), 141-161 (EHFA…YLNW), 163-183 (LAIL…FVVR), 240-262 (VLSW…VLAI), and 280-300 (IVMF…VVSF). The region spanning 340–573 (VEFNDVTFSY…GGHFAELARA (234 aa)) is the ABC transporter domain. 373 to 380 (GPTGAGKS) provides a ligand contact to ATP.

This sequence belongs to the ABC transporter superfamily. Beta-(1--&gt;2)glucan exporter (TC 3.A.1.108.1) family. Homodimer.

It is found in the cell inner membrane. It carries out the reaction [(1-&gt;2)-beta-D-glucosyl](n)(in) + ATP + H2O = [(1-&gt;2)-beta-D-glucosyl](n)(out) + ADP + phosphate + H(+). Functionally, involved in beta-(1--&gt;2)glucan export. Transmembrane domains (TMD) form a pore in the inner membrane and the ATP-binding domain (NBD) is responsible for energy generation. The sequence is that of Beta-(1--&gt;2)glucan export ATP-binding/permease protein NdvA from Bradyrhizobium diazoefficiens (strain JCM 10833 / BCRC 13528 / IAM 13628 / NBRC 14792 / USDA 110).